Consider the following 215-residue polypeptide: Adenylate kinase (215 aa).

10-15 (GTGKGT) lines the ATP pocket. Residues 30 to 59 (STGHILRKISTKKTLFGEKIKNIINSGKLV) are NMP. AMP contacts are provided by residues Thr31, Arg36, 57 to 59 (KLV), 85 to 88 (GFPR), and Gln92. Residues 122 to 157 (TRTINPITGTIYNNVIQKNSELKNLKINTLKSRLDD) are LID. Residues Arg123 and 132–133 (IY) each bind ATP. AMP is bound by residues Arg154 and Arg165. Asn198 is an ATP binding site.

The protein belongs to the adenylate kinase family. In terms of assembly, monomer.

Its subcellular location is the cytoplasm. The enzyme catalyses AMP + ATP = 2 ADP. It functions in the pathway purine metabolism; AMP biosynthesis via salvage pathway; AMP from ADP: step 1/1. Its function is as follows. Catalyzes the reversible transfer of the terminal phosphate group between ATP and AMP. Plays an important role in cellular energy homeostasis and in adenine nucleotide metabolism. This is Adenylate kinase from Buchnera aphidicola subsp. Baizongia pistaciae (strain Bp).